Here is a 239-residue protein sequence, read N- to C-terminus: Uridylate kinase (239 aa).

Residue 10-13 coordinates ATP; the sequence is KISG. An involved in allosteric activation by GTP region spans residues 18-23; that stretch reads GESGYG. G52 serves as a coordination point for UMP. 2 residues coordinate ATP: G53 and R57. UMP-binding positions include D72 and 133-140; that span reads TGNPYFTT. The ATP site is built by T160, Y166, and D169.

Belongs to the UMP kinase family. As to quaternary structure, homohexamer.

It is found in the cytoplasm. The catalysed reaction is UMP + ATP = UDP + ADP. The protein operates within pyrimidine metabolism; CTP biosynthesis via de novo pathway; UDP from UMP (UMPK route): step 1/1. With respect to regulation, allosterically activated by GTP. Inhibited by UTP. Its function is as follows. Catalyzes the reversible phosphorylation of UMP to UDP. The chain is Uridylate kinase from Chlorobaculum tepidum (strain ATCC 49652 / DSM 12025 / NBRC 103806 / TLS) (Chlorobium tepidum).